The chain runs to 686 residues: Mitochondrial Rho GTPase 1 (686 aa).

Residues 1-648 are Cytoplasmic-facing; the sequence is MPRRDLVRIV…PAQRIRVVAR (648 aa). A Miro 1 domain is found at 4-172; it reads RDLVRIVLVG…FYFAQKAVLH (169 aa). Residues 13 to 20, 59 to 63, and 117 to 120 each bind GTP; these read GDDGVGKS, DTSSN, and NKID. EF-hand domains are found at residues 188-223 and 341-376; these read KCLE…CFST and LGNQ…SPGN. 8 residues coordinate Ca(2+): aspartate 201, aspartate 203, aspartate 205, glutamate 212, aspartate 354, aspartate 356, aspartate 358, and glutamate 365. The 170-residue stretch at 455–624 folds into the Miro 2 domain; the sequence is RNVFLCYVLG…WVAITRVALD (170 aa). Residues 464–471, 506–510, and 574–577 contribute to the GTP site; these read GATGSGKT, EMEGV, and TKSD. A helical; Anchor for type IV membrane protein transmembrane segment spans residues 649 to 665; the sequence is WGLAATTISAIVAVWMK. Residues 666–686 lie on the Mitochondrial intermembrane side of the membrane; sequence WQGYSFKGIWGWMAKFAGLRT.

Belongs to the mitochondrial Rho GTPase family.

It is found in the mitochondrion outer membrane. Mitochondrial GTPase involved in mitochondrial trafficking. Probably involved in control of anterograde transport of mitochondria and their subcellular distribution. This Cryptococcus neoformans var. neoformans serotype D (strain B-3501A) (Filobasidiella neoformans) protein is Mitochondrial Rho GTPase 1 (GEM1).